The sequence spans 761 residues: Polyribonucleotide nucleotidyltransferase (761 aa).

Mg(2+) is bound by residues Asp532 and Asp538. In terms of domain architecture, KH spans 598 to 657 (PRVISVQIPVDKIGELIGPKGKTINAIQDETGADISIDEDGTVYIGAVDGPSAEAARAQV). The region spanning 669–741 (GEQFLGTVVK…DRGKLSLAPV (73 aa)) is the S1 motif domain.

The protein belongs to the polyribonucleotide nucleotidyltransferase family. Mg(2+) is required as a cofactor.

It is found in the cytoplasm. It carries out the reaction RNA(n+1) + phosphate = RNA(n) + a ribonucleoside 5'-diphosphate. Involved in mRNA degradation. Catalyzes the phosphorolysis of single-stranded polyribonucleotides processively in the 3'- to 5'-direction. The polypeptide is Polyribonucleotide nucleotidyltransferase (Leifsonia xyli subsp. xyli (strain CTCB07)).